A 336-amino-acid chain; its full sequence is Toluate 1,2-dioxygenase electron transfer component (336 aa).

Residues 3 to 97 enclose the 2Fe-2S ferredoxin-type domain; the sequence is HKVATDFEDG…DCVIRVPAAS (95 aa). Residues C40, C45, C48, and C81 each contribute to the [2Fe-2S] cluster site. The tract at residues 99–336 is ferredoxin-reductase; the sequence is VCKTQQAGYQ…FYYEKFAASA (238 aa). The region spanning 104–204 is the FAD-binding FR-type domain; it reads QAGYQAAISN…AGPLGAFYLR (101 aa).

Belongs to the bacterial ring-hydroxylating dioxygenase ferredoxin reductase family. This dioxygenase system consists of three proteins: the two subunits of the hydroxylase component (XylX and XylY), and an electron transfer component (XylZ). FAD is required as a cofactor. The cofactor is [2Fe-2S] cluster.

The catalysed reaction is 2 reduced [2Fe-2S]-[ferredoxin] + NAD(+) + H(+) = 2 oxidized [2Fe-2S]-[ferredoxin] + NADH. In terms of biological role, electron transfer component of toluate 1,2-dioxygenase system. The protein is Toluate 1,2-dioxygenase electron transfer component (xylZ) of Pseudomonas putida (Arthrobacter siderocapsulatus).